Consider the following 357-residue polypeptide: Hsp70-binding protein 1 (357 aa).

Residues 1-68 (MADKGSGGSR…DPPPEPMSEE (68 aa)) are disordered. Residues 23 to 35 (SSGGSGSSAGGSG) show a composition bias toward gly residues. ARM repeat units follow at residues 130 to 172 (ENMD…TCSQ), 175 to 215 (AAIQ…CLVR), 218 to 257 (EAGL…NLLV), and 260 to 299 (PEHK…SLVT). Phosphoserine is present on residues serine 349 and serine 354.

Interacts with the ATP-binding domain of HSPA1A. Detected in a ternary complex containing STUB1, HSPA1A and HSPBP1. Interacts with PGLYRP1; this interaction blocks the cytotoxic activity of the PGLYRP1-HSPA1A complex.

Functionally, inhibits HSPA1A chaperone activity by changing the conformation of the ATP-binding domain of HSPA1A and interfering with ATP binding. Interferes with ubiquitination mediated by STUB1 and inhibits chaperone-assisted degradation of target proteins. This chain is Hsp70-binding protein 1 (Hspbp1), found in Mus musculus (Mouse).